The following is a 452-amino-acid chain: Exodeoxyribonuclease 7 large subunit (452 aa).

Belongs to the XseA family. Heterooligomer composed of large and small subunits.

The protein localises to the cytoplasm. The catalysed reaction is Exonucleolytic cleavage in either 5'- to 3'- or 3'- to 5'-direction to yield nucleoside 5'-phosphates.. Bidirectionally degrades single-stranded DNA into large acid-insoluble oligonucleotides, which are then degraded further into small acid-soluble oligonucleotides. The polypeptide is Exodeoxyribonuclease 7 large subunit (Bacillus thuringiensis (strain Al Hakam)).